We begin with the raw amino-acid sequence, 92 residues long: Small ribosomal subunit protein bS18 (92 aa).

It belongs to the bacterial ribosomal protein bS18 family. Part of the 30S ribosomal subunit. Forms a tight heterodimer with protein bS6.

In terms of biological role, binds as a heterodimer with protein bS6 to the central domain of the 16S rRNA, where it helps stabilize the platform of the 30S subunit. This is Small ribosomal subunit protein bS18 from Caulobacter sp. (strain K31).